The sequence spans 416 residues: Serine hydroxymethyltransferase (416 aa).

(6S)-5,6,7,8-tetrahydrofolate contacts are provided by residues Leu118 and 122 to 124 (GHL). Lys227 carries the post-translational modification N6-(pyridoxal phosphate)lysine. Residues Glu242 and 350-352 (SPF) each bind (6S)-5,6,7,8-tetrahydrofolate.

It belongs to the SHMT family. In terms of assembly, homodimer. Requires pyridoxal 5'-phosphate as cofactor.

It localises to the cytoplasm. The enzyme catalyses (6R)-5,10-methylene-5,6,7,8-tetrahydrofolate + glycine + H2O = (6S)-5,6,7,8-tetrahydrofolate + L-serine. Its pathway is one-carbon metabolism; tetrahydrofolate interconversion. The protein operates within amino-acid biosynthesis; glycine biosynthesis; glycine from L-serine: step 1/1. Catalyzes the reversible interconversion of serine and glycine with tetrahydrofolate (THF) serving as the one-carbon carrier. This reaction serves as the major source of one-carbon groups required for the biosynthesis of purines, thymidylate, methionine, and other important biomolecules. Also exhibits THF-independent aldolase activity toward beta-hydroxyamino acids, producing glycine and aldehydes, via a retro-aldol mechanism. This chain is Serine hydroxymethyltransferase, found in Syntrophotalea carbinolica (strain DSM 2380 / NBRC 103641 / GraBd1) (Pelobacter carbinolicus).